The following is a 554-amino-acid chain: Hydroxylamine reductase (554 aa).

The [2Fe-2S] cluster site is built by Cys3, Cys6, Cys18, and Cys25. Hybrid [4Fe-2O-2S] cluster is bound by residues His252, Glu276, Cys320, Cys408, Cys436, Cys461, Glu495, and Lys497. Cysteine persulfide is present on Cys408.

It belongs to the HCP family. Requires [2Fe-2S] cluster as cofactor. It depends on hybrid [4Fe-2O-2S] cluster as a cofactor.

It localises to the cytoplasm. The catalysed reaction is A + NH4(+) + H2O = hydroxylamine + AH2 + H(+). Catalyzes the reduction of hydroxylamine to form NH(3) and H(2)O. The sequence is that of Hydroxylamine reductase from Shewanella loihica (strain ATCC BAA-1088 / PV-4).